The sequence spans 38 residues: Beta-defensin 1 (38 aa).

3 cysteine pairs are disulfide-bonded: Cys5–Cys34, Cys12–Cys27, and Cys17–Cys35.

It belongs to the beta-defensin family. In terms of assembly, monomer. Homodimer. Neutrophilic granules.

It is found in the secreted. It localises to the membrane. Has bactericidal activity. Active against E.coli ML35 but not against S.aureus 502A. May act as a ligand for C-C chemokine receptor CCR6. Positively regulates the sperm motility and bactericidal activity in a CCR6-dependent manner. Binds to CCR6 and triggers Ca2+ mobilization in the sperm which is important for its motility. In Bos taurus (Bovine), this protein is Beta-defensin 1 (DEFB1).